The following is a 196-amino-acid chain: Glycerol-3-phosphate acyltransferase (196 aa).

Transmembrane regions (helical) follow at residues 2-22 (GWWLFPILGYFIGSIPFSYLI), 51-71 (VVGGICLLLDALKGFFPVFIA), 80-100 (LVSLTAIATVLGHDFPIFMKF), 112-132 (IIFCLSWPTGIVFTLTWLVIV), and 137-156 (YASLGSLVALYISALLGYLF).

Belongs to the PlsY family. In terms of assembly, probably interacts with PlsX.

The protein resides in the cell inner membrane. The enzyme catalyses an acyl phosphate + sn-glycerol 3-phosphate = a 1-acyl-sn-glycero-3-phosphate + phosphate. It functions in the pathway lipid metabolism; phospholipid metabolism. Its function is as follows. Catalyzes the transfer of an acyl group from acyl-phosphate (acyl-PO(4)) to glycerol-3-phosphate (G3P) to form lysophosphatidic acid (LPA). This enzyme utilizes acyl-phosphate as fatty acyl donor, but not acyl-CoA or acyl-ACP. The polypeptide is Glycerol-3-phosphate acyltransferase (Thermotoga petrophila (strain ATCC BAA-488 / DSM 13995 / JCM 10881 / RKU-1)).